The chain runs to 405 residues: ATP phosphoribosyltransferase regulatory subunit (405 aa).

Belongs to the class-II aminoacyl-tRNA synthetase family. HisZ subfamily. In terms of assembly, heteromultimer composed of HisG and HisZ subunits.

Its subcellular location is the cytoplasm. Its pathway is amino-acid biosynthesis; L-histidine biosynthesis; L-histidine from 5-phospho-alpha-D-ribose 1-diphosphate: step 1/9. Required for the first step of histidine biosynthesis. May allow the feedback regulation of ATP phosphoribosyltransferase activity by histidine. The protein is ATP phosphoribosyltransferase regulatory subunit of Microcystis aeruginosa (strain NIES-843 / IAM M-2473).